A 121-amino-acid chain; its full sequence is Large ribosomal subunit protein bL20 (121 aa).

It belongs to the bacterial ribosomal protein bL20 family.

Functionally, binds directly to 23S ribosomal RNA and is necessary for the in vitro assembly process of the 50S ribosomal subunit. It is not involved in the protein synthesizing functions of that subunit. The polypeptide is Large ribosomal subunit protein bL20 (Wolbachia sp. subsp. Brugia malayi (strain TRS)).